The sequence spans 860 residues: DNA mismatch repair protein MutS (860 aa).

Residue 606 to 613 (GPNMSGKS) participates in ATP binding.

This sequence belongs to the DNA mismatch repair MutS family.

Functionally, this protein is involved in the repair of mismatches in DNA. It is possible that it carries out the mismatch recognition step. This protein has a weak ATPase activity. In Geobacillus sp. (strain WCH70), this protein is DNA mismatch repair protein MutS.